Consider the following 321-residue polypeptide: Mas-related G-protein coupled receptor member B4 (321 aa).

At 1-33 (MGTTTLAWNINNTAENGSYTEMFSCITKFNTLN) the chain is on the extracellular side. N-linked (GlcNAc...) asparagine glycosylation is found at asparagine 11 and asparagine 16. Residues 34–54 (FLTVIIAVVGLAGNGIVLWLL) form a helical membrane-spanning segment. Residues 55–62 (AFHLHRNA) are Cytoplasmic-facing. A helical transmembrane segment spans residues 63 to 83 (FSVYVLNLAGADFLYLFTQVV). The Extracellular segment spans residues 84 to 97 (HSLECVLQLDNNSF). Asparagine 94 carries an N-linked (GlcNAc...) asparagine glycan. The chain crosses the membrane as a helical span at residues 98 to 118 (YILLIVTMFAYLAGLCMIAAI). The Cytoplasmic segment spans residues 119-146 (SAERCLSVMWPIWYHCQRPRHTSAIMCA). The helical transmembrane segment at 147-167 (LVWVSSLLLSLVVGLGCGFLF) threads the bilayer. At 168–172 (SYYDY) the chain is on the extracellular side. A helical membrane pass occupies residues 173–193 (YFCITLNFITAAFLIVLSVVL). Over 194 to 215 (SVSSLALLVKIVWGSHRIPVTR) the chain is Cytoplasmic. The helical transmembrane segment at 216–236 (FFVTIALTVVVFIYFGMPFGI) threads the bilayer. Over 237 to 257 (CWFLLSRIMEFDSIFFNNVYE) the chain is Extracellular. The helical transmembrane segment at 258–278 (IIEFLSCVNSCANPIIYFLVG) threads the bilayer. Residues 279–321 (SIRQHRLRWQSLKLLLQRAMQDTPEEESGERGPSQRSGELETV) are Cytoplasmic-facing. The segment at 299–321 (QDTPEEESGERGPSQRSGELETV) is disordered.

The protein belongs to the G-protein coupled receptor 1 family. Mas subfamily.

Its subcellular location is the membrane. Functionally, orphan receptor. Probably involved in the function of nociceptive neurons. May regulate nociceptor function and/or development, including the sensation or modulation of pain. The polypeptide is Mas-related G-protein coupled receptor member B4 (Mrgprb4) (Mus musculus (Mouse)).